Here is a 137-residue protein sequence, read N- to C-terminus: Thionin-like protein 1 (137 aa).

The first 23 residues, 1-23 (MEDKRVAMLVVMMLVMGNMLIEA), serve as a signal peptide directing secretion.

Belongs to the plant thionin (TC 1.C.44) family. Post-translationally, is disulfide-linked.

It is found in the secreted. May be involved in plant defense. This is Thionin-like protein 1 from Arabidopsis thaliana (Mouse-ear cress).